Reading from the N-terminus, the 280-residue chain is Energy-coupling factor transporter ATP-binding protein EcfA2 (280 aa).

One can recognise an ABC transporter domain in the interval 3–245; it reads INLQNVSYTY…VSLLEKKQLG (243 aa). 40–47 contributes to the ATP binding site; the sequence is GHTGSGKS.

Belongs to the ABC transporter superfamily. Energy-coupling factor EcfA family. Forms a stable energy-coupling factor (ECF) transporter complex composed of 2 membrane-embedded substrate-binding proteins (S component), 2 ATP-binding proteins (A component) and 2 transmembrane proteins (T component).

The protein resides in the cell membrane. Functionally, ATP-binding (A) component of a common energy-coupling factor (ECF) ABC-transporter complex. Unlike classic ABC transporters this ECF transporter provides the energy necessary to transport a number of different substrates. This is Energy-coupling factor transporter ATP-binding protein EcfA2 from Streptococcus pyogenes serotype M28 (strain MGAS6180).